We begin with the raw amino-acid sequence, 354 residues long: Arginase-2, mitochondrial (354 aa).

A mitochondrion-targeting transit peptide spans 1–22 (MFLRSSASRLLHGQIPCVLTRS). Residues His-120, Asp-143, His-145, and Asp-147 each contribute to the Mn(2+) site. Substrate contacts are provided by residues 145-149 (HADIN), 156-158 (SGN), and Glu-202. Asp-251 and Asp-253 together coordinate Mn(2+). Substrate contacts are provided by Thr-265 and Glu-296.

This sequence belongs to the arginase family. Homotrimer. Mn(2+) serves as cofactor.

The protein resides in the mitochondrion. The enzyme catalyses L-arginine + H2O = urea + L-ornithine. Its pathway is nitrogen metabolism; urea cycle; L-ornithine and urea from L-arginine: step 1/1. May play a role in the regulation of extra-urea cycle arginine metabolism and also in down-regulation of nitric oxide synthesis. Extrahepatic arginase functions to regulate L-arginine bioavailability to nitric oxid synthase (NOS). Arginine metabolism is a critical regulator of innate and adaptive immune responses. Seems to be involved in negative regulation of the survival capacity of activated CD4(+) and CD8(+) T cells. May suppress inflammation-related signaling in asthmatic airway epithelium. May contribute to the immune evasion of H.pylori by restricting M1 macrophage activation and polyamine metabolism. May play a role in promoting prenatal immune suppression. Regulates RPS6KB1 signaling, which promotes endothelial cell senescence and inflammation and implicates NOS3/eNOS dysfunction. Can inhibit endothelial autophagy independently of its enzymatic activity implicating mTORC2 signaling. Involved in vascular smooth muscle cell senescence and apoptosis independently of its enzymatic activity. This chain is Arginase-2, mitochondrial (Arg2), found in Mus musculus (Mouse).